Reading from the N-terminus, the 709-residue chain is RxLR effector protein PITG_15110 (709 aa).

The signal sequence occupies residues 1-18; that stretch reads MHAYSAAVLMGLLMVAEG. The short motif at 51 to 66 is the RxLR-dEER element; that stretch reads RLLREPETTEASNEDR.

The protein belongs to the RxLR effector family.

It is found in the secreted. The protein resides in the host cytoplasm. Its subcellular location is the host cytoskeleton. Effector that enhances P.infestans colonization of Nicotiana benthamiana leaves. This Phytophthora infestans (strain T30-4) (Potato late blight agent) protein is RxLR effector protein PITG_15110.